Here is a 400-residue protein sequence, read N- to C-terminus: Enolase (400 aa).

Q153 provides a ligand contact to (2R)-2-phosphoglycerate. Catalysis depends on E195, which acts as the Proton donor. D231, E274, and D301 together coordinate Mg(2+). Positions 326, 355, 356, and 377 each coordinate (2R)-2-phosphoglycerate. The active-site Proton acceptor is the K326.

The protein belongs to the enolase family. Mg(2+) is required as a cofactor.

The protein resides in the cytoplasm. It localises to the secreted. Its subcellular location is the cell surface. The catalysed reaction is (2R)-2-phosphoglycerate = phosphoenolpyruvate + H2O. It participates in carbohydrate degradation; glycolysis; pyruvate from D-glyceraldehyde 3-phosphate: step 4/5. Catalyzes the reversible conversion of 2-phosphoglycerate (2-PG) into phosphoenolpyruvate (PEP). It is essential for the degradation of carbohydrates via glycolysis. The chain is Enolase from Halorubrum lacusprofundi (strain ATCC 49239 / DSM 5036 / JCM 8891 / ACAM 34).